A 123-amino-acid polypeptide reads, in one-letter code: Alpha-ketoglutarate dehydrogenase subunit 4, mitochondrial (123 aa).

A mitochondrion-targeting transit peptide spans 1–8 (MIATPIRL).

The protein belongs to the alpha-ketoglutarate dehydrogenase component 4 family. Component of the 2-oxoglutarate dehydrogenase complex (OGDC), also called alpha-ketoglutarate dehydrogenase (KGDH) complex. The copmplex is composed of the catalytic subunits OGDH (2-oxoglutarate dehydrogenase KGD1; also called E1 subunit), DLST (dihydrolipoamide succinyltransferase KGD2; also called E2 subunit) and DLD (dihydrolipoamide dehydrogenase LPD1; also called E3 subunit), and the assembly factor KGD4. Within OGDC, interacts (via N-terminus) with E3 subunit and (via C-terminus) with the complex core formed by E1 and E2 subunits.

Its subcellular location is the mitochondrion. Its function is as follows. Molecular adapter that is necessary to a form a stable 2-oxoglutarate dehydrogenase enzyme complex (OGDC). Required for incorporation of the E3 subunit (LPD1) into the E1-E2 core (KGD1-KGD2) of mitochondrial OGDC, and acting as a stability factor for the fully assembled complex. The polypeptide is Alpha-ketoglutarate dehydrogenase subunit 4, mitochondrial (Saccharomyces cerevisiae (strain ATCC 204508 / S288c) (Baker's yeast)).